Consider the following 249-residue polypeptide: Phosphomannomutase 2 (249 aa).

The active-site Nucleophile is Asp-12. Mg(2+)-binding residues include Asp-12 and Asp-14. Asp-14 (proton donor/acceptor) is an active-site residue. Residues Arg-21, Arg-123, Arg-134, Arg-141, Ser-179, and Asp-181 each coordinate alpha-D-mannose 1-phosphate. Position 209 (Asp-209) interacts with Mg(2+).

This sequence belongs to the eukaryotic PMM family. In terms of assembly, homodimer.

Its subcellular location is the cytoplasm. It catalyses the reaction alpha-D-mannose 1-phosphate = D-mannose 6-phosphate. The protein operates within nucleotide-sugar biosynthesis; GDP-alpha-D-mannose biosynthesis; alpha-D-mannose 1-phosphate from D-fructose 6-phosphate: step 2/2. In terms of biological role, involved in the synthesis of the GDP-mannose and dolichol-phosphate-mannose required for a number of critical mannosyl transfer reactions. The sequence is that of Phosphomannomutase 2 (pmmB) from Dictyostelium discoideum (Social amoeba).